Reading from the N-terminus, the 260-residue chain is Thiamine thiazole synthase (260 aa).

NAD(+) contacts are provided by residues alanine 36, 55-56 (EQ), glycine 63, and 154-156 (HVD). The Fe cation site is built by aspartate 156 and histidine 171. Residue methionine 224 coordinates NAD(+). Arginine 234 is a binding site for glycine.

The protein belongs to the THI4 family. Homooctamer; tetramer of dimers. Fe(2+) is required as a cofactor.

The enzyme catalyses hydrogen sulfide + glycine + NAD(+) = ADP-5-ethyl-4-methylthiazole-2-carboxylate + nicotinamide + 3 H2O + H(+). It participates in cofactor biosynthesis; thiamine diphosphate biosynthesis. Its function is as follows. Involved in the biosynthesis of the thiazole moiety of thiamine. Catalyzes the conversion of NAD and glycine to adenosine diphosphate 5-(2-hydroxyethyl)-4-methylthiazole-2-carboxylate (ADT), an adenylated thiazole intermediate, using free sulfide as a source of sulfur. The chain is Thiamine thiazole synthase from Methanosarcina mazei (strain ATCC BAA-159 / DSM 3647 / Goe1 / Go1 / JCM 11833 / OCM 88) (Methanosarcina frisia).